A 58-amino-acid polypeptide reads, in one-letter code: Large ribosomal subunit protein bL32 (58 aa).

The protein belongs to the bacterial ribosomal protein bL32 family.

This chain is Large ribosomal subunit protein bL32, found in Caldicellulosiruptor saccharolyticus (strain ATCC 43494 / DSM 8903 / Tp8T 6331).